The chain runs to 216 residues: Refilin-A (216 aa).

Residues 1–83 are disordered; the sequence is MVGHLHLQGM…LPNPPASEMR (83 aa). The segment covering 12-22 has biased composition (basic and acidic residues); it reads DSLKEQGREGL. Positions 29–39 are enriched in pro residues; that stretch reads GLPPSPSPSPP. The segment covering 57–71 has biased composition (low complexity); it reads ASSEPPGPSEARAPP. Arginine 163 bears the Asymmetric dimethylarginine mark.

Belongs to the Refilin family. In terms of assembly, interacts with FLNA and FLNB.

It localises to the cytoplasm. Its subcellular location is the cytoskeleton. In terms of biological role, involved in the regulation of the perinuclear actin network and nuclear shape through interaction with filamins. Plays an essential role in actin cytoskeleton formation in developing cartilaginous cells. The chain is Refilin-A from Homo sapiens (Human).